The chain runs to 103 residues: Small ribosomal subunit protein uS10 (103 aa).

The protein belongs to the universal ribosomal protein uS10 family. In terms of assembly, part of the 30S ribosomal subunit.

Involved in the binding of tRNA to the ribosomes. This Chromobacterium violaceum (strain ATCC 12472 / DSM 30191 / JCM 1249 / CCUG 213 / NBRC 12614 / NCIMB 9131 / NCTC 9757 / MK) protein is Small ribosomal subunit protein uS10.